A 252-amino-acid chain; its full sequence is 2-succinyl-6-hydroxy-2,4-cyclohexadiene-1-carboxylate synthase (252 aa).

It belongs to the AB hydrolase superfamily. MenH family. In terms of assembly, monomer.

It catalyses the reaction 5-enolpyruvoyl-6-hydroxy-2-succinyl-cyclohex-3-ene-1-carboxylate = (1R,6R)-6-hydroxy-2-succinyl-cyclohexa-2,4-diene-1-carboxylate + pyruvate. Its pathway is quinol/quinone metabolism; 1,4-dihydroxy-2-naphthoate biosynthesis; 1,4-dihydroxy-2-naphthoate from chorismate: step 3/7. It participates in quinol/quinone metabolism; menaquinone biosynthesis. Catalyzes a proton abstraction reaction that results in 2,5-elimination of pyruvate from 2-succinyl-5-enolpyruvyl-6-hydroxy-3-cyclohexene-1-carboxylate (SEPHCHC) and the formation of 2-succinyl-6-hydroxy-2,4-cyclohexadiene-1-carboxylate (SHCHC). The protein is 2-succinyl-6-hydroxy-2,4-cyclohexadiene-1-carboxylate synthase of Salmonella choleraesuis (strain SC-B67).